A 466-amino-acid polypeptide reads, in one-letter code: MTYAPVSDVLSGKLAVDSEVTVRGWIRSRRDSKAGISFLAIYDGSCFDPIQAVVPNNLNNYDNEVLKLTTGCSVEVTGKIVESPAQGQDFELAATDVKVVGWVEDAETYPMAKTRHSIEYLREVAHLRPRTNVIGAVARVRNCLSQAIHRFYHEQGYFWVSAPLITASDAEGAGEMFRVSTLDMENLPRTDAGKVDYNEDFFGKETFLTVSGQLNAEAYACALSKVYTFGPTFRAENSNTSRHLAEFWMVEPEVAFAELDDVAKLAEDMLKYVFKAVLEERRDDLEFFAQRIDKQAITRLEQFVSSDFAQVDYTDAIQILLDSGREFEFPVEWGIDMSSEHERFLAEEHFKAPVIVKNYPKDIKAFYMRMNDDGKTVAAMDVLAPGIGEIIGGSQREERLDVLDARMREMGIDPEHMSWYRDLRRYGTVPHAGFGLGFERLVSYVTGMGNVRDVIPFPRTPRSANF.

This sequence belongs to the class-II aminoacyl-tRNA synthetase family. As to quaternary structure, homodimer.

The protein localises to the cytoplasm. It carries out the reaction tRNA(Asn) + L-asparagine + ATP = L-asparaginyl-tRNA(Asn) + AMP + diphosphate + H(+). The protein is Asparagine--tRNA ligase of Vibrio parahaemolyticus serotype O3:K6 (strain RIMD 2210633).